Consider the following 25-residue polypeptide: Alanine racemase (25 aa).

It belongs to the alanine racemase family. As to quaternary structure, homodimer. Pyridoxal 5'-phosphate is required as a cofactor.

The enzyme catalyses L-alanine = D-alanine. The protein operates within amino-acid biosynthesis; D-alanine biosynthesis; D-alanine from L-alanine: step 1/1. In terms of biological role, catalyzes the interconversion of L-alanine and D-alanine. The protein is Alanine racemase of Pseudomonas fluorescens.